Here is a 227-residue protein sequence, read N- to C-terminus: Prolactin-5A1 (227 aa).

Residues methionine 1–serine 27 form the signal peptide. Asparagine 47 is a glycosylation site (N-linked (GlcNAc...) asparagine). The cysteines at positions 85 and 204 are disulfide-linked.

This sequence belongs to the somatotropin/prolactin family. As to expression, expressed specifically in placenta. Highly expressed in invasive trophoblast cells lining the central placental vessel.

It is found in the secreted. The chain is Prolactin-5A1 (Prl5a1) from Rattus norvegicus (Rat).